The following is a 355-amino-acid chain: DNA polymerase IV (355 aa).

One can recognise a UmuC domain in the interval 4-185 (IIHVDMDCFY…LPLKKIPGVG (182 aa)). Residues D8 and D103 each contribute to the Mg(2+) site. Residue E104 is part of the active site.

The protein belongs to the DNA polymerase type-Y family. Monomer. Requires Mg(2+) as cofactor.

Its subcellular location is the cytoplasm. The catalysed reaction is DNA(n) + a 2'-deoxyribonucleoside 5'-triphosphate = DNA(n+1) + diphosphate. In terms of biological role, poorly processive, error-prone DNA polymerase involved in untargeted mutagenesis. Copies undamaged DNA at stalled replication forks, which arise in vivo from mismatched or misaligned primer ends. These misaligned primers can be extended by PolIV. Exhibits no 3'-5' exonuclease (proofreading) activity. May be involved in translesional synthesis, in conjunction with the beta clamp from PolIII. The protein is DNA polymerase IV of Pasteurella multocida (strain Pm70).